The chain runs to 97 residues: MEFKHVLMILGVIILILAPLIMYSGLGEDEGYFGGADGAAGDLIMEISPNYEPWFEPFWEPPSGEIESLLFALQAAIGAIIIGYFFGYNKAKYEDKN.

2 helical membrane-spanning segments follow: residues 6-26 and 68-88; these read VLMI…YSGL and SLLF…FFGY.

The protein belongs to the CbiN family. In terms of assembly, forms an energy-coupling factor (ECF) transporter complex composed of an ATP-binding protein (A component, CbiO), a transmembrane protein (T component, CbiQ) and 2 possible substrate-capture proteins (S components, CbiM and CbiN) of unknown stoichimetry.

It localises to the cell membrane. Its pathway is cofactor biosynthesis; adenosylcobalamin biosynthesis. Functionally, part of the energy-coupling factor (ECF) transporter complex CbiMNOQ involved in cobalt import. The polypeptide is Cobalt transport protein CbiN (Methanococcus maripaludis (strain C5 / ATCC BAA-1333)).